We begin with the raw amino-acid sequence, 439 residues long: AT-hook motif nuclear-localized protein 13 (439 aa).

Disordered stretches follow at residues 1 to 46 (MDSR…NSYN), 69 to 216 (QRLP…LGGT), and 342 to 439 (GRKQ…NSPQ). Composition is skewed to low complexity over residues 9 to 31 (QQQQ…QQQQ) and 79 to 95 (PHQP…PQQQ). Residues 109–120 (SPSSVAATQQHS) are compositionally biased toward polar residues. The segment covering 130 to 139 (VKKKRGRPRK) has biased composition (basic residues). Positions 131–139 (KKKRGRPRK) match the Bipartite nuclear localization signal motif. Residues 131–143 (KKKRGRPRKYAAD) constitute a DNA-binding region (a.T hook 1). Gly residues-rich tracts occupy residues 143–152 (DGGGGGGGGS) and 171–183 (YGGG…GGDS). The a.T hook 2 DNA-binding region spans 196-208 (KRNRGRPPGSGKK). The PPC domain occupies 217–359 (GGVGFTPHVI…GRAQNTPEPA (143 aa)). The segment covering 347-357 (QSAGRAQNTPE) has biased composition (polar residues). Composition is skewed to low complexity over residues 376–386 (SPRSQGQQHSS) and 403–416 (NNNN…FGNS). The segment covering 428 to 439 (MYQNLWPGNSPQ) has biased composition (polar residues).

The protein localises to the nucleus. Functionally, transcription factor that specifically binds AT-rich DNA sequences related to the nuclear matrix attachment regions (MARs). This Arabidopsis thaliana (Mouse-ear cress) protein is AT-hook motif nuclear-localized protein 13.